The following is a 1214-amino-acid chain: Peregrin (1214 aa).

A C2H2-type zinc finger spans residues 21 to 47; sequence YECPVETCRKVYKSYSGIEYHLYHYDH. Disordered stretches follow at residues 43–87 and 118–177; these read YHYD…SPGR and VVSE…PKLP. Residues 58-67 are compositionally biased toward basic residues; it reads LRKHKKKGRQ. The tract at residues 59-222 is interaction with KAT6A and KAT6B; that stretch reads RKHKKKGRQS…VEYDMDEEDY (164 aa). A compositionally biased stretch (low complexity) spans 74-85; the sequence is QSPSPSEVSQSP. Over residues 119 to 130 the composition is skewed to acidic residues; it reads VSEDEEAPEEAP. A Phosphoserine modification is found at Ser120. N6-acetyllysine is present on Lys147. The span at 148-167 shows a compositional bias: basic residues; sequence SGKHKNKEKRKDSNHHHHHN. Ser238 carries the post-translational modification Phosphoserine. The PHD-type 1 zinc-finger motif lies at 273–323; it reads DAVCCICNDGECQNSNVILFCDMCNLAVHQECYGVPYIPEGQWLCRRCLQS. The C2HC pre-PHD-type zinc-finger motif lies at 327 to 360; the sequence is AVDCALCPNKGGAFKQTDDGRWAHVVCALWIPEV. The segment at 384–448 adopts a PHD-type 2 zinc-finger fold; sequence LTCYICKQRG…RKTAYCDIHT (65 aa). The segment at 448-489 is disordered; sequence TPPGSARRLPALSHSEGEEDEDEEEDEGKGWSSEKVKKAKAK. Ser460 and Ser462 each carry phosphoserine. Positions 464–474 are enriched in acidic residues; the sequence is GEEDEDEEEDE. The interval 501 to 821 is interaction with MEAF6 and ING5; it reads LAEKRAAAPV…IKKEMTALRR (321 aa). Positions 543–1079 are required for RUNX1 and RUNX2 transcriptional activation; that stretch reads YWTLKRQSRN…RGAGWLSEDE (537 aa). An N6-acetyllysine modification is found at Lys580. Residues 628-732 form the Bromo domain; the sequence is MQLTPFLILL…EQGGAVLRQA (105 aa). Residues 819-1062 form a disordered region; it reads LRRKLAHQRE…VGTGRGVGHS (244 aa). A compositionally biased stretch (basic and acidic residues) spans 825–838; it reads HQRETGRDGPERHG. The residue at position 858 (Thr858) is a Phosphothreonine. The segment covering 858–871 has biased composition (low complexity); that stretch reads TDSAAEESSSQETS. Phosphoserine occurs at positions 860, 917, 922, and 926. The span at 993–1021 shows a compositional bias: low complexity; that stretch reads SLPRSSSDSESSSSSSSSAASDRTSTTPS. Ser1076 carries the post-translational modification Phosphoserine. The PWWP domain occupies 1085 to 1168; that stretch reads ALDLVWAKCR…RTKLVPLGVN (84 aa). A Phosphoserine modification is found at Ser1187.

As to quaternary structure, component of some HBO1 complex composed of KAT7/HBO1, MEAF6, ING5, and BRPF1. Component of the MOZ/MORF complex composed at least of ING5, KAT6A, KAT6B, MEAF6 and one of BRPF1, BRD1/BRPF2 and BRPF3. Interacts (via PHD-type zinc finger domains) with unmethylated histone H3 at 'Lys-4' (H3K4me0). Interacts with trimethylated 'Lys-36' of histone H3 (H3K36me3). Interacts with ING5; interaction directs BRPF1 to H4K4me3-enriched chromatin at the 5' of active genes. Interacts with KAT7. Acetylated by KAT6A. In terms of tissue distribution, high levels in testis.

It localises to the nucleus. It is found in the chromosome. The protein localises to the cytoplasm. Its function is as follows. Scaffold subunit of various histone acetyltransferase (HAT) complexes, such as the MOZ/MORF and HBO1 complexes, which have a histone H3 acetyltransferase activity. Plays a key role in HBO1 complex by directing KAT7/HBO1 specificity towards histone H3 'Lys-14' acetylation (H3K14ac). Some HAT complexes preferentially mediate histone H3 'Lys-23' (H3K23ac) acetylation. Positively regulates the transcription of RUNX1 and RUNX2. The protein is Peregrin of Homo sapiens (Human).